The primary structure comprises 437 residues: UDP-N-acetylmuramate--L-alanine ligase (437 aa).

114 to 120 (GTHGKTS) contributes to the ATP binding site.

It belongs to the MurCDEF family.

Its subcellular location is the cytoplasm. The catalysed reaction is UDP-N-acetyl-alpha-D-muramate + L-alanine + ATP = UDP-N-acetyl-alpha-D-muramoyl-L-alanine + ADP + phosphate + H(+). It functions in the pathway cell wall biogenesis; peptidoglycan biosynthesis. Cell wall formation. This is UDP-N-acetylmuramate--L-alanine ligase from Lactobacillus acidophilus (strain ATCC 700396 / NCK56 / N2 / NCFM).